The sequence spans 248 residues: Protein maestro (248 aa).

The disordered stretch occupies residues 1-23; that stretch reads MEQTRKIPNQPLPTPTSQSKKRR. An HEAT repeat occupies 128–163; the sequence is SFFIDITLQARTLLDDEDDSVRYSAFVLFGQLASFA.

Prominent expression seen in testis, brain, liver and heart. Weakly expressed in the kidney.

The protein localises to the nucleus. It localises to the nucleolus. The protein is Protein maestro (Mro) of Mus musculus (Mouse).